Reading from the N-terminus, the 129-residue chain is Trefoil factor 2 (129 aa).

Positions Met-1 to Gly-23 are cleaved as a signal peptide. P-type domains are found at residues Cys-29–Leu-73 and Glu-79–Gln-122. Disulfide bonds link Cys-29/Cys-127, Cys-31/Cys-58, Cys-42/Cys-57, Cys-52/Cys-69, Cys-81/Cys-107, Cys-91/Cys-106, and Cys-101/Cys-118.

As to expression, stomach and pancreas.

It localises to the secreted. Inhibits gastrointestinal motility and gastric acid secretion. Could function as a structural component of gastric mucus, possibly by stabilizing glycoproteins in the mucus gel through interactions with carbohydrate side chains. This is Trefoil factor 2 (Tff2) from Mus musculus (Mouse).